We begin with the raw amino-acid sequence, 504 residues long: Glutamate--tRNA ligase (504 aa).

Positions 25 to 35 match the 'HIGH' region motif; it reads PSPTGNPHVGL. Positions 122, 124, 149, and 151 each coordinate Zn(2+). The 'KMSKS' region motif lies at 270-274; that stretch reads KLSKR. Residue Lys273 coordinates ATP.

This sequence belongs to the class-I aminoacyl-tRNA synthetase family. Glutamate--tRNA ligase type 1 subfamily. In terms of assembly, monomer. Zn(2+) serves as cofactor.

It localises to the cytoplasm. It catalyses the reaction tRNA(Glu) + L-glutamate + ATP = L-glutamyl-tRNA(Glu) + AMP + diphosphate. Functionally, catalyzes the attachment of glutamate to tRNA(Glu) in a two-step reaction: glutamate is first activated by ATP to form Glu-AMP and then transferred to the acceptor end of tRNA(Glu). The protein is Glutamate--tRNA ligase of Streptomyces avermitilis (strain ATCC 31267 / DSM 46492 / JCM 5070 / NBRC 14893 / NCIMB 12804 / NRRL 8165 / MA-4680).